The following is a 100-amino-acid chain: Aspartyl/glutamyl-tRNA(Asn/Gln) amidotransferase subunit C (100 aa).

It belongs to the GatC family. In terms of assembly, heterotrimer of A, B and C subunits.

It carries out the reaction L-glutamyl-tRNA(Gln) + L-glutamine + ATP + H2O = L-glutaminyl-tRNA(Gln) + L-glutamate + ADP + phosphate + H(+). The catalysed reaction is L-aspartyl-tRNA(Asn) + L-glutamine + ATP + H2O = L-asparaginyl-tRNA(Asn) + L-glutamate + ADP + phosphate + 2 H(+). Functionally, allows the formation of correctly charged Asn-tRNA(Asn) or Gln-tRNA(Gln) through the transamidation of misacylated Asp-tRNA(Asn) or Glu-tRNA(Gln) in organisms which lack either or both of asparaginyl-tRNA or glutaminyl-tRNA synthetases. The reaction takes place in the presence of glutamine and ATP through an activated phospho-Asp-tRNA(Asn) or phospho-Glu-tRNA(Gln). This is Aspartyl/glutamyl-tRNA(Asn/Gln) amidotransferase subunit C from Streptococcus sanguinis (strain SK36).